Consider the following 551-residue polypeptide: Calnexin (551 aa).

An N-terminal signal peptide occupies residues 1–23 (MRPQNVAGVAGTGALIMAAGALA). The Lumenal portion of the chain corresponds to 24-477 (DQTVFHPTSL…QAIKQMPEVA (454 aa)). Residues 293 to 315 (EEEPETIPDPEAEKPEEWDDEED) are disordered. Residues 478–498 (AGLAAAVFTLLGMLLALFGFI) traverse the membrane as a helical segment. The Cytoplasmic segment spans residues 499 to 551 (GSAPTKVKQTTVKTKAVAPVAPAGEEEKKALDQAGVEIPAEGSKKRVTRSTKE). The interval 526 to 551 (KKALDQAGVEIPAEGSKKRVTRSTKE) is disordered.

The protein belongs to the calreticulin family.

The protein resides in the endoplasmic reticulum membrane. In terms of biological role, endoplasmic reticulum (ER) chaperone that functions to stabilize non-native glycoproteins and retain them in the ER until they are properly folded or targeted for ER associated degradation (ERAD). With co-chaperone DNJ1, coordinately maintains ER homeostasis and contributes to maintenance of cell wall architecture. The protein is Calnexin of Cryptococcus neoformans var. grubii serotype A (strain H99 / ATCC 208821 / CBS 10515 / FGSC 9487) (Filobasidiella neoformans var. grubii).